Consider the following 192-residue polypeptide: Probable Brix domain-containing ribosomal biogenesis protein (192 aa).

In terms of domain architecture, Brix spans 2 to 191 (RPAAITTSQR…DFRTKDERMK (190 aa)).

Functionally, probably involved in the biogenesis of the ribosome. In Methanopyrus kandleri (strain AV19 / DSM 6324 / JCM 9639 / NBRC 100938), this protein is Probable Brix domain-containing ribosomal biogenesis protein.